Consider the following 96-residue polypeptide: Histone-like protein p6 (96 aa).

A DNA-binding region spans residues 1 to 19; the sequence is MAKMMQREITKTTVNVAKM.

It belongs to the phi29likevirus histone-like protein p6 family. As to quaternary structure, homodimer. Homomultimer. Binds to double-stranded DNA giving rise to multimeric nucleoprotein complexes. Binding specificity for the viral DNA is based on supercoiling, the viral genome having a negative superhelicity lower than that of plasmid DNA. Interacts with the DNA replication protein p17; this interaction optimizes the binding of protein p6 at the viral DNA ends, thus favoring the initiation of replication.

Histone-like nucleoprotein that binds to the viral dsDNA and responsible for wrapping and compacting the viral DNA about 4-fold. Forms a nucleoprotein complex in which the DNA adopts a right-handed toroidal conformation winding around a protein core. Binds ito most, if not all, the viral genome, although with different affinity, the highest one corresponding to the genome ends. The formation of the nucleoprotein complex at the genome ends, activates the initiation of viral DNA replication. The binding of p6 would recruit the complex formed by the TP and the DNA polymerase to the origin. Protein p6 also represses early transcription from promoter C2, and, together with protein p4, represses transcription from promoters A2b and A2c and activates late transcription from promoter A3. Protein p6 is therefore involved in the early to late transcription switch. The formation of the nucleoprotein complex at the right end of the phage genome where the early promoter C2 is located affects local topology, which may contribute to the promoter repression. This is Histone-like protein p6 (6) from Bacillus phage PZA (Bacteriophage PZA).